Consider the following 286-residue polypeptide: 4-hydroxybenzoate octaprenyltransferase (286 aa).

7 helical membrane passes run 21-40 (GTLL…AGGM), 95-115 (ILFV…NGLV), 142-162 (FLGI…TGEV), 167-187 (WWLF…YAMV), 210-230 (QIIG…GWSA), 235-255 (LYGL…MLIF), and 266-286 (FLNN…DYLI).

This sequence belongs to the UbiA prenyltransferase family. Mg(2+) is required as a cofactor.

It is found in the cell inner membrane. It carries out the reaction all-trans-octaprenyl diphosphate + 4-hydroxybenzoate = 4-hydroxy-3-(all-trans-octaprenyl)benzoate + diphosphate. The protein operates within cofactor biosynthesis; ubiquinone biosynthesis. Its function is as follows. Catalyzes the prenylation of para-hydroxybenzoate (PHB) with an all-trans polyprenyl group. Mediates the second step in the final reaction sequence of ubiquinone-8 (UQ-8) biosynthesis, which is the condensation of the polyisoprenoid side chain with PHB, generating the first membrane-bound Q intermediate 3-octaprenyl-4-hydroxybenzoate. In Shewanella baltica (strain OS155 / ATCC BAA-1091), this protein is 4-hydroxybenzoate octaprenyltransferase.